Here is a 250-residue protein sequence, read N- to C-terminus: ATP synthase subunit a (250 aa).

Transmembrane regions (helical) follow at residues 29–49 (ASLFMAASAAVAVGFLYFATS), 84–104 (FFPLVFSLFMFVLTANLLGMF), 114–134 (IIVTFALAILVIGTVLVYGFY), 143–163 (VFVPSGVPGILLPLVVSIEII), 193–213 (FVASLGALGAVGVGGAVLPLI), and 216–236 (VALTGLEFLVAFLQAYVFAVL).

It belongs to the ATPase A chain family. In terms of assembly, F-type ATPases have 2 components, CF(1) - the catalytic core - and CF(0) - the membrane proton channel. CF(1) has five subunits: alpha(3), beta(3), gamma(1), delta(1), epsilon(1). CF(0) has three main subunits: a(1), b(2) and c(9-12). The alpha and beta chains form an alternating ring which encloses part of the gamma chain. CF(1) is attached to CF(0) by a central stalk formed by the gamma and epsilon chains, while a peripheral stalk is formed by the delta and b chains.

The protein localises to the cell inner membrane. In terms of biological role, key component of the proton channel; it plays a direct role in the translocation of protons across the membrane. The polypeptide is ATP synthase subunit a (Rhizobium leguminosarum bv. trifolii (strain WSM2304)).